A 229-amino-acid polypeptide reads, in one-letter code: MENNHHLAKDSLDELNPKRGKGEHETQVSQYTVVEEATIPQSLVKTSRPADHKVMEASKVADTRTAWSTKIPAVLLPVFVINIALFKYLVFANFSTKDRVLFGLGNGGINIFSMWLLLATYETWFRSIKEVIVACGAGIRSFPQKRGVNMLYAILKLTFVNAFAIPLLMFFRSHFEQWRLGCPLVERVIGVMLNVAYFIIEIENPGLFTRVFNKYCDCLFAIRDILNRN.

The span at 1–26 shows a compositional bias: basic and acidic residues; that stretch reads MENNHHLAKDSLDELNPKRGKGEHET. The disordered stretch occupies residues 1 to 27; the sequence is MENNHHLAKDSLDELNPKRGKGEHETQ. The next 4 helical transmembrane spans lie at 71–91, 100–120, 151–171, and 188–208; these read IPAV…YLVF, VLFG…LLAT, LYAI…LMFF, and VIGV…PGLF.

It belongs to the WTF family.

It localises to the endoplasmic reticulum membrane. Functionally, may act in meiotic drive. The protein is Wtf element wtf14 of Schizosaccharomyces pombe (strain 972 / ATCC 24843) (Fission yeast).